Reading from the N-terminus, the 154-residue chain is 6,7-dimethyl-8-ribityllumazine synthase (154 aa).

5-amino-6-(D-ribitylamino)uracil is bound by residues Phe23, 57 to 59 (AFE), and 81 to 83 (AVI). 86 to 87 (AT) is a (2S)-2-hydroxy-3-oxobutyl phosphate binding site. His89 serves as the catalytic Proton donor. Position 114 (Phe114) interacts with 5-amino-6-(D-ribitylamino)uracil. Arg128 is a binding site for (2S)-2-hydroxy-3-oxobutyl phosphate.

This sequence belongs to the DMRL synthase family.

It catalyses the reaction (2S)-2-hydroxy-3-oxobutyl phosphate + 5-amino-6-(D-ribitylamino)uracil = 6,7-dimethyl-8-(1-D-ribityl)lumazine + phosphate + 2 H2O + H(+). It functions in the pathway cofactor biosynthesis; riboflavin biosynthesis; riboflavin from 2-hydroxy-3-oxobutyl phosphate and 5-amino-6-(D-ribitylamino)uracil: step 1/2. Its function is as follows. Catalyzes the formation of 6,7-dimethyl-8-ribityllumazine by condensation of 5-amino-6-(D-ribitylamino)uracil with 3,4-dihydroxy-2-butanone 4-phosphate. This is the penultimate step in the biosynthesis of riboflavin. The chain is 6,7-dimethyl-8-ribityllumazine synthase from Syntrophus aciditrophicus (strain SB).